A 106-amino-acid polypeptide reads, in one-letter code: Evasin P1168 (106 aa).

Positions 1–24 are cleaved as a signal peptide; the sequence is MEVKISTFLQIAVLIVLGIHLIAA. 3 disulfides stabilise this stretch: C45-C67, C49-C69, and C60-C80. Residues N48, N54, and N64 are each glycosylated (N-linked (GlcNAc...) asparagine).

The protein localises to the secreted. Functionally, salivary chemokine-binding protein which binds to host chemokines CXCL1, CXCL2 and CXCL8. The protein is Evasin P1168 of Ixodes ricinus (Common tick).